A 351-amino-acid polypeptide reads, in one-letter code: Protein RecA (351 aa).

73–80 (GPESSGKT) contributes to the ATP binding site.

The protein belongs to the RecA family.

The protein localises to the cytoplasm. Its function is as follows. Can catalyze the hydrolysis of ATP in the presence of single-stranded DNA, the ATP-dependent uptake of single-stranded DNA by duplex DNA, and the ATP-dependent hybridization of homologous single-stranded DNAs. It interacts with LexA causing its activation and leading to its autocatalytic cleavage. The sequence is that of Protein RecA from Herbaspirillum seropedicae.